The primary structure comprises 297 residues: Probable endonuclease 4 (297 aa).

9 residues coordinate Zn(2+): H69, H110, E145, D179, H182, H214, D227, H229, and E259.

It belongs to the AP endonuclease 2 family. Requires Zn(2+) as cofactor.

It carries out the reaction Endonucleolytic cleavage to 5'-phosphooligonucleotide end-products.. Endonuclease IV plays a role in DNA repair. It cleaves phosphodiester bonds at apurinic or apyrimidinic (AP) sites, generating a 3'-hydroxyl group and a 5'-terminal sugar phosphate. The polypeptide is Probable endonuclease 4 (Oceanobacillus iheyensis (strain DSM 14371 / CIP 107618 / JCM 11309 / KCTC 3954 / HTE831)).